We begin with the raw amino-acid sequence, 1139 residues long: MPTEARDNNRHIHLGKVRDPHHQHAQRFCSNRISTCKYNGFSFLPRFLYEQFRRYNNIFFLAIALLQQIPDVSPTGRYTTAVPFLIILSVSALKEIFEDVKRRRSDNKVNAFSVEILVDGHWIEKQWKDVSVGDFIRIDNDSLFPADLLLLASSEQQGMAYIETSNLDGETNLKIKQALDITSTMTSPEKLSQFESEITCEPPSRHVNEFNGNIEINGVARHFGIDQLLLRGARLKNTAWIFGAVIYTGHDSKLLMNSKRAPLKSGTIDVQTNYRIIFLFFVLVALALISATGSEIWRGNNIPQAWYLSFLEHDPKGSFLWGVLTFFILYNNLIPISLQVTLEVVRFFQAIYINNDIEMYDVNSDSCAIARTSNLNEELGQVKFIMSDKTGTLTRNVMKFKRLSIGSRNYGNNEDDEFADASLIEDYRQGDEHSTSILEVLKMMAVCHTVVPENKDGQLIYQSSSPDEAALVRGAASQSVSFHTRQPQKVICNVFGEDETIEILDVIDFTSDRKRMSVIVRDGAGGDIKLYTKGADTVIFERLEHGKEQEEAVEYCTEHLEDYASFGYRTLCFSMRHLTEQEYSQWAPEYKKAILAIDNRAKLLADAAEKLERNMILVGATAIEDKLQEWVPETIQALMAADIRVWMLTGDKRETAINIAHSCALCHTNTELLIVDKTTYEETYQKLEQFVARAIELEKQEKGFAMVIDGKSLLHALTGEARKHFGDLALRCHAVVCCRMSPMQKAEVVEMVRKLAKHVVLAIGDGANDVAMIQAANVGVGISGEEGLQAASASDYAIPRFHFLRRLLLVHGAWNHDRSVKVILYSFYKNICLYIIELWFAMFSAWSGQTIFERWTIGMFNVIFTAWPPVVLGLFDHPVPAEQIMKYPALYASFQNRAFSIGNFSLWIGLAIVHSLSLFFLTYATMEHQVVWDNGLTGGWLMLGNCAYTFVVATVCFKALLECDSWTWPVVVACIGSIGLWIVFVIVYSLVFPHIGGIGADMAGMAAIMMSSYTFWLALLFIPLATLLWDLVIKSLFTIAMPTPRELAVMYNKRTTSFNGFERLASYSSNVLENMRLLTSSLRGSTTGSTRSRTASEASLALAEQTRYGFAFSQDESSAVAQTELIRNVDSTREKPTGR.

Helical transmembrane passes span 78-98 (YTTA…EIFE), 276-296 (IIFL…GSEI), and 318-338 (SFLW…PISL). The active-site 4-aspartylphosphate intermediate is the D388. A run of 6 helical transmembrane segments spans residues 831–851 (ICLY…GQTI), 855–875 (WTIG…LGLF), 901–921 (IGNF…LFFL), 935–955 (GLTG…VATV), 972–992 (VACI…SLVF), and 1013–1033 (YTFW…DLVI).

This sequence belongs to the cation transport ATPase (P-type) (TC 3.A.3) family. Type IV subfamily.

The protein resides in the cell membrane. It is found in the early endosome membrane. It localises to the recycling endosome membrane. The catalysed reaction is ATP + H2O + phospholipidSide 1 = ADP + phosphate + phospholipidSide 2.. It carries out the reaction a 1,2-diacyl-sn-glycero-3-phospho-L-serine(out) + ATP + H2O = a 1,2-diacyl-sn-glycero-3-phospho-L-serine(in) + ADP + phosphate + H(+). In terms of biological role, transports phosphatidylserine from the outer to the inner leaflet of the plasma membrane, thereby maintaining the enrichment of this phospholipid in the inner leaflet. Ectopic exposure of phosphatidylserine on the cell surface may result in removal of living cells by neighboring phagocytes. Regulation of the phosphatidylserine distribution in plasma membranes is likely to help in the maintenance and control of the membrane surface charge. Plays a role in the formation of the tubular membrane structure and in membrane trafficking and is specifically involved in the recycling and degradation of endocytic cargo, likely with its chaperone protein chat-1. This is Phospholipid-transporting ATPase tat-1 (tat-1) from Caenorhabditis elegans.